Reading from the N-terminus, the 177-residue chain is Large ribosomal subunit protein uL6 (177 aa).

Belongs to the universal ribosomal protein uL6 family. In terms of assembly, part of the 50S ribosomal subunit.

In terms of biological role, this protein binds to the 23S rRNA, and is important in its secondary structure. It is located near the subunit interface in the base of the L7/L12 stalk, and near the tRNA binding site of the peptidyltransferase center. The chain is Large ribosomal subunit protein uL6 from Pseudomonas entomophila (strain L48).